Here is a 152-residue protein sequence, read N- to C-terminus: Protein FERTILITY RESTORER RF2, mitochondrial (152 aa).

A mitochondrion-targeting transit peptide spans 1 to 52 (MSTLVTCSLPGAVTTHASTRRFGGSQFQTSQASCISFKREVSAKAVLRSVRC). Residues 52-69 (CNATQTQSAQRKSSTATV) are compositionally biased toward polar residues. Residues 52–101 (CNATQTQSAQRKSSTATVKRSDPKGKTQGPKLDDGSGGFPPFRFGKGGGG) form a disordered region.

The protein localises to the mitochondrion. Non-functional allele of the RF2 fertility restorer of rice varieties with LD-type cytoplasmic male sterility (CMS). Non-functional RF2 alleles are found in japonica cultivars Taichung 65 and Nipponbare (AC F1SZ44), and is due to the presence of Thr-78 which replaces Ile-78 in the functional allele. Functional allele is found in the japonica cultivars Fukuyama and Owarihatamochi (AC F1SZ42), and indica cultivar Kasalath (AC F1SZ41). The chain is Protein FERTILITY RESTORER RF2, mitochondrial from Oryza sativa subsp. japonica (Rice).